The chain runs to 483 residues: Glutamyl-tRNA(Gln) amidotransferase subunit A (483 aa).

Active-site charge relay system residues include lysine 76 and serine 151. Serine 175 serves as the catalytic Acyl-ester intermediate.

This sequence belongs to the amidase family. GatA subfamily. In terms of assembly, heterotrimer of A, B and C subunits.

The enzyme catalyses L-glutamyl-tRNA(Gln) + L-glutamine + ATP + H2O = L-glutaminyl-tRNA(Gln) + L-glutamate + ADP + phosphate + H(+). Functionally, allows the formation of correctly charged Gln-tRNA(Gln) through the transamidation of misacylated Glu-tRNA(Gln) in organisms which lack glutaminyl-tRNA synthetase. The reaction takes place in the presence of glutamine and ATP through an activated gamma-phospho-Glu-tRNA(Gln). This chain is Glutamyl-tRNA(Gln) amidotransferase subunit A, found in Pseudomonas fluorescens (strain Pf0-1).